We begin with the raw amino-acid sequence, 274 residues long: Transcriptional activator PerA (274 aa).

The HTH araC/xylS-type domain maps to 168–265; the sequence is DRVIKVIELD…NTTPKKYNGV (98 aa). DNA-binding regions (H-T-H motif) lie at residues 185-206 and 232-255; these read GDVS…NKEN and IDEI…KEYY.

In terms of biological role, could help in the transcriptional activator of eaeA expression in enteropathogenic E.coli. However, it seems that it is PerC which acts as an activator. In Escherichia coli O127:H6 (strain E2348/69 / EPEC), this protein is Transcriptional activator PerA (perA).